The chain runs to 193 residues: Protein GrpE (193 aa).

Positions 1–22 (MDPKEKEKMAEELNVEETKDTA) are enriched in basic and acidic residues. The tract at residues 1–45 (MDPKEKEKMAEELNVEETKDTAEEQPQDDQAEEAAPLTHEEQLEK) is disordered. Acidic residues predominate over residues 23–32 (EEQPQDDQAE).

It belongs to the GrpE family. As to quaternary structure, homodimer.

It is found in the cytoplasm. Functionally, participates actively in the response to hyperosmotic and heat shock by preventing the aggregation of stress-denatured proteins, in association with DnaK and GrpE. It is the nucleotide exchange factor for DnaK and may function as a thermosensor. Unfolded proteins bind initially to DnaJ; upon interaction with the DnaJ-bound protein, DnaK hydrolyzes its bound ATP, resulting in the formation of a stable complex. GrpE releases ADP from DnaK; ATP binding to DnaK triggers the release of the substrate protein, thus completing the reaction cycle. Several rounds of ATP-dependent interactions between DnaJ, DnaK and GrpE are required for fully efficient folding. The protein is Protein GrpE of Bacteroides thetaiotaomicron (strain ATCC 29148 / DSM 2079 / JCM 5827 / CCUG 10774 / NCTC 10582 / VPI-5482 / E50).